The following is a 199-amino-acid chain: Probable cobalt-precorrin-6B C(15)-methyltransferase (decarboxylating) (199 aa).

S-adenosyl-L-methionine contacts are provided by residues Thr24, 48 to 52 (GCGTG), Asp72, and Ala101.

Belongs to the methyltransferase superfamily. Archaeal-type CbiT family.

The catalysed reaction is Co-precorrin-6B + S-adenosyl-L-methionine = Co-precorrin-7 + S-adenosyl-L-homocysteine + CO2. It functions in the pathway cofactor biosynthesis; adenosylcobalamin biosynthesis; cob(II)yrinate a,c-diamide from sirohydrochlorin (anaerobic route): step 8/10. In terms of biological role, catalyzes the methylation of C-15 in cobalt-precorrin-6B followed by the decarboxylation of C-12 to form cobalt-precorrin-7. The polypeptide is Probable cobalt-precorrin-6B C(15)-methyltransferase (decarboxylating) (Saccharolobus islandicus (strain L.S.2.15 / Lassen #1) (Sulfolobus islandicus)).